Consider the following 365-residue polypeptide: NADH-quinone oxidoreductase subunit H 2 (365 aa).

Transmembrane regions (helical) follow at residues 1–21, 71–91, 100–120, 136–156, 199–219, 254–274, 301–321, and 342–362; these read MFVVLFVLTLILLYAVFVVWA, LAPVLIFTAIFAGFATLPFAP, VGVFFMITIVSLDVVGIFLAG, IAQVISYEIPLTLSILAVVLI, FVSWNAFKYPFLLLAYVVFFI, ILFLAEYAMMLLVAFLGVVLF, IAGYAWGLFWLISKGITVVFL, and WKILLPLSLFLVIVSGVWVVW.

The protein belongs to the complex I subunit 1 family. NDH-1 is composed of 14 different subunits. Subunits NuoA, H, J, K, L, M, N constitute the membrane sector of the complex.

The protein resides in the cell inner membrane. The catalysed reaction is a quinone + NADH + 5 H(+)(in) = a quinol + NAD(+) + 4 H(+)(out). Its function is as follows. NDH-1 shuttles electrons from NADH, via FMN and iron-sulfur (Fe-S) centers, to quinones in the respiratory chain. The immediate electron acceptor for the enzyme in this species is believed to be ubiquinone. Couples the redox reaction to proton translocation (for every two electrons transferred, four hydrogen ions are translocated across the cytoplasmic membrane), and thus conserves the redox energy in a proton gradient. This subunit may bind ubiquinone. The sequence is that of NADH-quinone oxidoreductase subunit H 2 from Cytophaga hutchinsonii (strain ATCC 33406 / DSM 1761 / CIP 103989 / NBRC 15051 / NCIMB 9469 / D465).